The primary structure comprises 443 residues: Tol-Pal system protein TolB (443 aa).

Residues 1 to 33 (MKIGIINTKIRTVFSAFACMIAASLVCTMPARA) form the signal peptide.

It belongs to the TolB family. As to quaternary structure, the Tol-Pal system is composed of five core proteins: the inner membrane proteins TolA, TolQ and TolR, the periplasmic protein TolB and the outer membrane protein Pal. They form a network linking the inner and outer membranes and the peptidoglycan layer.

It is found in the periplasm. In terms of biological role, part of the Tol-Pal system, which plays a role in outer membrane invagination during cell division and is important for maintaining outer membrane integrity. The protein is Tol-Pal system protein TolB of Brucella melitensis biotype 1 (strain ATCC 23456 / CCUG 17765 / NCTC 10094 / 16M).